Here is a 963-residue protein sequence, read N- to C-terminus: Glycine dehydrogenase (decarboxylating) (963 aa).

The residue at position 710 (Lys-710) is an N6-(pyridoxal phosphate)lysine.

Belongs to the GcvP family. The glycine cleavage system is composed of four proteins: P, T, L and H. Pyridoxal 5'-phosphate serves as cofactor.

The catalysed reaction is N(6)-[(R)-lipoyl]-L-lysyl-[glycine-cleavage complex H protein] + glycine + H(+) = N(6)-[(R)-S(8)-aminomethyldihydrolipoyl]-L-lysyl-[glycine-cleavage complex H protein] + CO2. Its function is as follows. The glycine cleavage system catalyzes the degradation of glycine. The P protein binds the alpha-amino group of glycine through its pyridoxal phosphate cofactor; CO(2) is released and the remaining methylamine moiety is then transferred to the lipoamide cofactor of the H protein. The sequence is that of Glycine dehydrogenase (decarboxylating) from Pseudoalteromonas translucida (strain TAC 125).